A 56-amino-acid polypeptide reads, in one-letter code: Photosystem II assembly protein Psb34 (56 aa).

The Cytoplasmic segment spans residues 1-33 (MRYTTDEGGRLNNFAIEPKVYQAQPWTPQQKVR). A helical membrane pass occupies residues 34–54 (AALLVGGGLLLVAGLVAIAVG). Topologically, residues 55-56 (VS) are extracellular.

Part of photosystem II (PSII) assembly intermediate complex PSII-I; crystallized from a strain without psbJ, it forms monomeric PSII before addition of the oxygen evolving complex. PSII-I includes 3 assembly factors not found in mature PSII (Psb27, Psb28 and Psb34). The N-terminus of Psb34 (this protein) binds to CP47 (psbB) in close proximity to PsbH on the cytoplasmic face of PSII.

The protein resides in the cellular thylakoid membrane. Its function is as follows. Involved in photosystem II (PSII) assembly and/or repair, probably in conversion of late PSII assembly intermediates into mature dimeric PSII. This is Photosystem II assembly protein Psb34 from Thermosynechococcus vestitus (strain NIES-2133 / IAM M-273 / BP-1).